The sequence spans 161 residues: Small ribosomal subunit protein uS9 (161 aa).

Disordered stretches follow at residues 1 to 27 (MAQI…APKA) and 142 to 161 (KERK…FSKR).

The protein belongs to the universal ribosomal protein uS9 family.

The protein is Small ribosomal subunit protein uS9 of Clavibacter michiganensis subsp. michiganensis (strain NCPPB 382).